A 296-amino-acid chain; its full sequence is Phosphatidylglycerol--prolipoprotein diacylglyceryl transferase (296 aa).

7 consecutive transmembrane segments (helical) span residues 17–37, 59–79, 97–117, 129–149, 204–224, 230–250, and 257–277; these read LAVRWYGLMYLVGFIAAIVVG, MMFYGVLGTVLGGRLGYVLFY, GGMSFHGGFLGVTLAMMLFAW, FVAPMVPLGLAAGRLGNFING, SQLYEIALEGIALFFVLFLFA, MGAISALFLIGYGLARFTVEF, and FLGLLALGLSMGQWLSLPMIL. An a 1,2-diacyl-sn-glycero-3-phospho-(1'-sn-glycerol)-binding site is contributed by Arg142.

Belongs to the Lgt family.

It is found in the cell inner membrane. The enzyme catalyses L-cysteinyl-[prolipoprotein] + a 1,2-diacyl-sn-glycero-3-phospho-(1'-sn-glycerol) = an S-1,2-diacyl-sn-glyceryl-L-cysteinyl-[prolipoprotein] + sn-glycerol 1-phosphate + H(+). Its pathway is protein modification; lipoprotein biosynthesis (diacylglyceryl transfer). Functionally, catalyzes the transfer of the diacylglyceryl group from phosphatidylglycerol to the sulfhydryl group of the N-terminal cysteine of a prolipoprotein, the first step in the formation of mature lipoproteins. The polypeptide is Phosphatidylglycerol--prolipoprotein diacylglyceryl transferase (Burkholderia cenocepacia (strain HI2424)).